A 131-amino-acid chain; its full sequence is MFAVLKTGGKQYKVQAGDVLRVEKLACEAGDKIQFNDILMVGGDSVTVGAPFVAGAAVQAEVIAQIKGEKTIHYVKRRRKHSSQRTKGHRQQLTLLRVTDVLASGADASGVAVATGTADARRAAHNASAKE.

Belongs to the bacterial ribosomal protein bL21 family. Part of the 50S ribosomal subunit. Contacts protein L20.

Functionally, this protein binds to 23S rRNA in the presence of protein L20. In Cereibacter sphaeroides (strain ATCC 17023 / DSM 158 / JCM 6121 / CCUG 31486 / LMG 2827 / NBRC 12203 / NCIMB 8253 / ATH 2.4.1.) (Rhodobacter sphaeroides), this protein is Large ribosomal subunit protein bL21.